The following is a 166-amino-acid chain: Large ribosomal subunit protein uL10 (166 aa).

The protein belongs to the universal ribosomal protein uL10 family. In terms of assembly, part of the ribosomal stalk of the 50S ribosomal subunit. The N-terminus interacts with L11 and the large rRNA to form the base of the stalk. The C-terminus forms an elongated spine to which L12 dimers bind in a sequential fashion forming a multimeric L10(L12)X complex.

Its function is as follows. Forms part of the ribosomal stalk, playing a central role in the interaction of the ribosome with GTP-bound translation factors. In Flavobacterium psychrophilum (strain ATCC 49511 / DSM 21280 / CIP 103535 / JIP02/86), this protein is Large ribosomal subunit protein uL10.